The primary structure comprises 233 residues: Small ribosomal subunit protein uS2c (233 aa).

Belongs to the universal ribosomal protein uS2 family.

The protein resides in the plastid. Its subcellular location is the chloroplast. This is Small ribosomal subunit protein uS2c (rps2) from Staurastrum punctulatum (Green alga).